The sequence spans 212 residues: Glycerol-3-phosphate acyltransferase (212 aa).

The next 4 helical transmembrane spans lie at 3 to 23 (ILLAALVAYLIGSVSFAVVVS), 78 to 98 (DVAVAWVAIAVFLGHLYPVFF), 115 to 135 (AVHPVLGLATALTWLIVAFFF), and 155 to 177 (FLFGTGHNPVAWAVLAMSVLLVW).

It belongs to the PlsY family. In terms of assembly, probably interacts with PlsX.

The protein localises to the cell inner membrane. It catalyses the reaction an acyl phosphate + sn-glycerol 3-phosphate = a 1-acyl-sn-glycero-3-phosphate + phosphate. It functions in the pathway lipid metabolism; phospholipid metabolism. Catalyzes the transfer of an acyl group from acyl-phosphate (acyl-PO(4)) to glycerol-3-phosphate (G3P) to form lysophosphatidic acid (LPA). This enzyme utilizes acyl-phosphate as fatty acyl donor, but not acyl-CoA or acyl-ACP. This Burkholderia lata (strain ATCC 17760 / DSM 23089 / LMG 22485 / NCIMB 9086 / R18194 / 383) protein is Glycerol-3-phosphate acyltransferase.